The sequence spans 231 residues: Protein INCA1 (231 aa).

The interval 75 to 99 (SLHPLEGLPPPEKLWRRKRKKLHLE) is interaction with CCNA1 and CCNA1/CDK2 complex; essential for CDK2 inhibitory activity. The short motif at 90–95 (RRKRKK) is the Nuclear localization signal element. At Thr180 the chain carries Phosphothreonine.

The protein belongs to the INCA family. Interacts with CCNA1. Identified in a complex with CCNA1 and CDK2. Interacts with ZNF16; the interaction inhibits INCA1 activity and induces the cell cycle process. Interacts with SPACA9. Interacts with CCNA2, CCNB1 and CCNE1. Interacts with the CCNA1/CDK2 complex. Interacts with ING5, DAZAP2, RNF26, USP15, SPOUT1, DPH7, TRIM26 and RAB5C. Post-translationally, phosphorylated when part of a complex with CCNA1 and CDK2.

Its subcellular location is the nucleus. The protein localises to the cytoplasm. Binds to CDK2-bound cyclins and inhibits the kinase activity of CDK2; binding to cyclins is critical for its function as CDK inhibitor. Inhibits cell growth and proliferation and may play a role in cell cycle control. Required for ING5-mediated regulation of S-phase progression, enhancement of Fas-induced apoptosis and inhibition of cell growth. In Mus musculus (Mouse), this protein is Protein INCA1 (Inca1).